The sequence spans 253 residues: MLEAYIRERRRQKEILLMTHIVMGYPDFETSMAIVEQMVEAGVDLMELQIPFSEPMADGPVILGANQAALSGGARVERCFEFARQAAAKFDIPFLFMTYYNILFKYGVTPFVNKMADINIKGAIVPDLPPEEGQAYLKAMEEQNLSPIHIFSPRTSNERMDFLASQTRGFVYCVARKGVTGKETRFTEEIAGYLDRCRQATTLPLAVGFGVKDEADIAFLKGKADIAVVGSEMIRVVENQGVEGVGRFIQSLA.

Catalysis depends on proton acceptor residues glutamate 47 and aspartate 58.

Belongs to the TrpA family. Tetramer of two alpha and two beta chains.

It carries out the reaction (1S,2R)-1-C-(indol-3-yl)glycerol 3-phosphate + L-serine = D-glyceraldehyde 3-phosphate + L-tryptophan + H2O. Its pathway is amino-acid biosynthesis; L-tryptophan biosynthesis; L-tryptophan from chorismate: step 5/5. In terms of biological role, the alpha subunit is responsible for the aldol cleavage of indoleglycerol phosphate to indole and glyceraldehyde 3-phosphate. The sequence is that of Tryptophan synthase alpha chain from Desulforapulum autotrophicum (strain ATCC 43914 / DSM 3382 / VKM B-1955 / HRM2) (Desulfobacterium autotrophicum).